The sequence spans 396 residues: MAKLNAYFGEFGGQFVPQILVPALDQLEQAFIDAQQDDAFRAEFMSLLQEYAGRPTALTLTQNITKGTKTKLYLKREDLLHGGAHKTNQVLGQALLAKRMGKHEIIAETGAGQHGVATALACALLGLKCRVYMGAKDVERQSPNVFRMRLMGATVIPVHSGSATLKDACNEALRDWSASYETAHYLLGTAAGPHPFPTIVREFQRIIGEETKNQILAREGRLPDAVIACVGGGSNAIGMFADFIEEESVRLIGIEPAGKGIHTHQHGAPLKHGKTGIFFGMKAPLMQDEHGQVEESYSVSAGLDFPSVGPQHAYLNAIGRAEYESITDDEALDAFQALARNEGIIPALESSHALAHAIKMAYAEPDKEQLLVVNLSGRGDKDIFTVHKLLEDKGAL.

An N6-(pyridoxal phosphate)lysine modification is found at Lys86.

This sequence belongs to the TrpB family. In terms of assembly, tetramer of two alpha and two beta chains. Pyridoxal 5'-phosphate serves as cofactor.

The enzyme catalyses (1S,2R)-1-C-(indol-3-yl)glycerol 3-phosphate + L-serine = D-glyceraldehyde 3-phosphate + L-tryptophan + H2O. Its pathway is amino-acid biosynthesis; L-tryptophan biosynthesis; L-tryptophan from chorismate: step 5/5. The beta subunit is responsible for the synthesis of L-tryptophan from indole and L-serine. This Vibrio cholerae serotype O1 (strain ATCC 39315 / El Tor Inaba N16961) protein is Tryptophan synthase beta chain.